Reading from the N-terminus, the 405-residue chain is Zinc finger protein ubi-d4 (405 aa).

Disordered regions lie at residues Arg80–Pro147, Asp165–Arg194, Ala210–Lys230, and Ala248–Leu280. 2 stretches are compositionally biased toward basic and acidic residues: residues Pro100 to Gly110 and Asp126 to Asp140. Over residues Asp165 to Glu174 the composition is skewed to acidic residues. The C2H2-type; atypical zinc-finger motif lies at Tyr209–His246. A compositionally biased stretch (basic and acidic residues) spans Arg267 to Pro277. 2 PHD-type zinc fingers span residues Asn284–Cys344 and Cys341–Leu391.

Belongs to the requiem/DPF family.

Its subcellular location is the cytoplasm. It localises to the nucleus. Its function is as follows. May be a transcription factor required for the apoptosis response following survival factor withdrawal from myeloid cells. Might also have a role in the development and maturation of lymphoid cells. This Gallus gallus (Chicken) protein is Zinc finger protein ubi-d4 (REQ).